The chain runs to 807 residues: Glycerol-3-phosphate acyltransferase (807 aa).

The HXXXXD motif signature appears at Cys308–Met313.

The protein belongs to the GPAT/DAPAT family.

The protein resides in the cell inner membrane. The catalysed reaction is sn-glycerol 3-phosphate + an acyl-CoA = a 1-acyl-sn-glycero-3-phosphate + CoA. Its pathway is phospholipid metabolism; CDP-diacylglycerol biosynthesis; CDP-diacylglycerol from sn-glycerol 3-phosphate: step 1/3. This chain is Glycerol-3-phosphate acyltransferase, found in Shewanella sp. (strain MR-4).